The chain runs to 308 residues: D-alanine--D-alanine ligase (308 aa).

Residues 105 to 302 (KAIFRSLGLA…FPDLCDRILD (198 aa)) enclose the ATP-grasp domain. Residue 133-188 (DLPFGLPCVVKPAGEGSSVGVHLVNAAAELGPACRDAAGYAGDVIVERYVKGTEVD) participates in ATP binding. The Mg(2+) site is built by Asp-256, Glu-269, and Asn-271.

This sequence belongs to the D-alanine--D-alanine ligase family. The cofactor is Mg(2+). It depends on Mn(2+) as a cofactor.

The protein localises to the cytoplasm. The catalysed reaction is 2 D-alanine + ATP = D-alanyl-D-alanine + ADP + phosphate + H(+). The protein operates within cell wall biogenesis; peptidoglycan biosynthesis. In terms of biological role, cell wall formation. This Anaeromyxobacter dehalogenans (strain 2CP-C) protein is D-alanine--D-alanine ligase.